We begin with the raw amino-acid sequence, 348 residues long: Ephrin-4 (348 aa).

The signal sequence occupies residues 1-20 (MKQFFEFLITTFLLLGLAAA). The Ephrin RBD domain occupies 21-178 (DEHIVYWNST…SQNMRLSMKV (158 aa)). Residue N28 is glycosylated (N-linked (GlcNAc...) asparagine). 2 disulfides stabilise this stretch: C53/C91 and C79/C167. A glycan (N-linked (GlcNAc...) asparagine) is linked at N157. Residues 207 to 237 (GGQEDEDSDNDNAHLLPRDLEGSTNPKFRRP) form a disordered region. The GPI-anchor amidated serine moiety is linked to residue S329. A propeptide spans 330-348 (STSLSTNFAILLAVIYVLY) (removed in mature form).

Belongs to the ephrin family. As to quaternary structure, interacts with lat-2. May undergo proteolysis by metalloprotease sup-17 to give rise to a soluble form.

It localises to the cell membrane. In terms of biological role, regulates the formation or stabilization of cell-cell contacts at several stages of epithelial morphogenesis. In early embryonic development, involved in ventral closure of the epidermis. During male tail morphogenesis, regulates precursor cell sorting together with mab-20 and allows the formation of distinct sensory rays. Probably acts as a ligand for lad-2 to regulate axon guidance of several neurons including SDQL, SDQR, SMD and PLN neurons during neurogenesis. The sequence is that of Ephrin-4 (efn-4) from Caenorhabditis elegans.